The primary structure comprises 258 residues: Global transcriptional regulator CodY (258 aa).

The segment at 1–156 (MSSLLDKTRM…SATIIGLEIL (156 aa)) is GAF domain. The H-T-H motif DNA-binding region spans 204–223 (ASKIADKVGITRSVIVNALR).

Belongs to the CodY family.

Its subcellular location is the cytoplasm. Functionally, DNA-binding global transcriptional regulator which is involved in the adaptive response to starvation and acts by directly or indirectly controlling the expression of numerous genes in response to nutrient availability. During rapid exponential growth, CodY is highly active and represses genes whose products allow adaptation to nutrient depletion. The polypeptide is Global transcriptional regulator CodY (Clostridium botulinum (strain Okra / Type B1)).